The following is a 367-amino-acid chain: Protein SGT1 homolog (367 aa).

TPR repeat units follow at residues 6-39 (ASDLESKAKAAFVDDDFELAAELYTQAIEASPAT), 40-73 (AELYADRAQAHIKLGNYTEAVADANKAIELDPSM), and 75-107 (KAYLRKGAACIRLEEYQTAKAALELGYSFASGD). Positions 165 to 254 (KPKYRHDFYN…AEQITWTSLD (90 aa)) constitute a CS domain. Disordered regions lie at residues 261–289 (AVPQKIIPPAESAQRPSYPSSKSKKDWDK) and 347–367 (VGSKKVEGSPPDGMELKKWEY). Residues 277–367 (SYPSSKSKKD…DGMELKKWEY (91 aa)) enclose the SGS domain.

It belongs to the SGT1 family. Interacts (via CS domain) with RAR1 (via CHORD 2 domain). Interacts with RAD6. Expressed in roots, root tips, shoot apical meristem (SAM), young leaves, flag leaves and ears.

It localises to the cytoplasm. The protein localises to the nucleus. In terms of biological role, involved in basal disease resistance to bacterial blight (X.oryzae). May act as positive regulator of basal defense. Probably required for SCF-mediated ubiquitination, by coupling HSP90 to SCF complex for ubiquitination of HSP90 client proteins. This chain is Protein SGT1 homolog, found in Oryza sativa subsp. japonica (Rice).